A 387-amino-acid chain; its full sequence is MSVIKMTDLELAGKRVFIRADLNVPVKDGKVTSDARILASLPTIKLCLEAGAKVMVTSHLGRPTEGEYNEEFSLAPVVNYLNDALDCDVKLAKDYLDGLELNAGELVVLENVRFNKGEKKNEEALSKKYAALCDIFVMDAFGTAHRAQASTHGVGMNAPIACAGPLLAAELEALGKAMDNPARPLVAIVGGSKVSTKLTVLESLSKIADQLVVGGGIANTFIAAQGHNVGKSLYEADLVETAKKLMVECAIPVATDVACAKAFDENAEAEIKNVADVQDDDMIFDLGPDSTAVLADIIKNAKTILWNGPVGVFEFKNFEAGTAGISKAIADSEGFSVAGGGDTLAAIDKFGIKADVSYISTGGGAFLEFVEGKVLPAVAMLEERAKA.

Substrate-binding positions include 21-23, Arg-36, 59-62, Arg-113, and Arg-146; these read DLN and HLGR. ATP-binding positions include Lys-197, Glu-314, and 340–343; that span reads GGDT.

It belongs to the phosphoglycerate kinase family. In terms of assembly, monomer.

It localises to the cytoplasm. It catalyses the reaction (2R)-3-phosphoglycerate + ATP = (2R)-3-phospho-glyceroyl phosphate + ADP. The protein operates within carbohydrate degradation; glycolysis; pyruvate from D-glyceraldehyde 3-phosphate: step 2/5. The protein is Phosphoglycerate kinase of Aliivibrio salmonicida (strain LFI1238) (Vibrio salmonicida (strain LFI1238)).